Reading from the N-terminus, the 157-residue chain is Transcription elongation factor GreA (157 aa).

Positions 47–75 (SGEYEDAKKAQALLEGRIRELKHLLSRAE) form a coiled coil.

This sequence belongs to the GreA/GreB family.

In terms of biological role, necessary for efficient RNA polymerase transcription elongation past template-encoded arresting sites. The arresting sites in DNA have the property of trapping a certain fraction of elongating RNA polymerases that pass through, resulting in locked ternary complexes. Cleavage of the nascent transcript by cleavage factors such as GreA or GreB allows the resumption of elongation from the new 3'terminus. GreA releases sequences of 2 to 3 nucleotides. This chain is Transcription elongation factor GreA, found in Chloroflexus aurantiacus (strain ATCC 29366 / DSM 635 / J-10-fl).